A 652-amino-acid polypeptide reads, in one-letter code: Endoplasmic reticulum chaperone BiP (652 aa).

Positions methionine 1–alanine 16 are cleaved as a signal peptide. Residues glycine 34–tyrosine 37, lysine 94, glycine 225–threonine 227, glutamate 291–serine 298, and glycine 362–arginine 365 contribute to the ATP site. Positions lysine 123 to lysine 278 are nucleotide-binding (NBD). The interval glutamine 407–valine 417 is interdomain linker. The substrate-binding (SBD) stretch occupies residues cysteine 418–threonine 498. Positions serine 630–leucine 652 are disordered. Over residues glycine 642–leucine 652 the composition is skewed to acidic residues. The short motif at lysine 649–leucine 652 is the Prevents secretion from ER element.

The protein belongs to the heat shock protein 70 family. As to quaternary structure, monomer and homooligomer; homooligomerization via the interdomain linker inactivates the chaperone activity and acts as a storage of HSPA5/BiP molecules. Interacts with DNAJC10. Interacts with DNAJB9/ERdj4; leading to recruit HSPA5/BiP to ERN1/IRE1. Interacts with ERN1/IRE1; interaction takes place following interaction with DNAJB9/ERdj4 and leads to inactivate ERN1/IRE1.

The protein resides in the endoplasmic reticulum lumen. It is found in the melanosome. Its subcellular location is the cytoplasm. The protein localises to the cell surface. The enzyme catalyses ATP + H2O = ADP + phosphate + H(+). With respect to regulation, the chaperone activity is regulated by ATP-induced allosteric coupling of the nucleotide-binding (NBD) and substrate-binding (SBD) domains. In the ADP-bound and nucleotide-free (apo) states, the two domains have little interaction. In contrast, in the ATP-bound state the two domains are tightly coupled, which results in drastically accelerated kinetics in both binding and release of polypeptide substrates. J domain-containing co-chaperones (DNAJB9/ERdj4 or DNAJC10/ERdj5) stimulate the ATPase activity and are required for efficient substrate recognition by HSPA5/BiP. Homooligomerization inactivates participating HSPA5/BiP protomers and probably act as reservoirs to store HSPA5/BiP molecules when they are not needed by the cell. Endoplasmic reticulum chaperone that plays a key role in protein folding and quality control in the endoplasmic reticulum lumen. Involved in the correct folding of proteins and degradation of misfolded proteins via its interaction with DNAJC10/ERdj5, probably to facilitate the release of DNAJC10/ERdj5 from its substrate. Acts as a key repressor of the EIF2AK3/PERK and ERN1/IRE1-mediated unfolded protein response (UPR). In the unstressed endoplasmic reticulum, recruited by DNAJB9/ERdj4 to the luminal region of ERN1/IRE1, leading to disrupt the dimerization of ERN1/IRE1, thereby inactivating ERN1/IRE1. Also binds and inactivates EIF2AK3/PERK in unstressed cells. Accumulation of misfolded protein in the endoplasmic reticulum causes release of HSPA5/BiP from ERN1/IRE1 and EIF2AK3/PERK, allowing their homodimerization and subsequent activation. May also play a role in apoptosis and cell proliferation. The polypeptide is Endoplasmic reticulum chaperone BiP (Gallus gallus (Chicken)).